The primary structure comprises 195 residues: CASP-like protein IN26 (195 aa).

Residues 1 to 26 lie on the Cytoplasmic side of the membrane; that stretch reads VAPTGSVETEKAGPSYKPKEYYKVTE. A helical transmembrane segment spans residues 27-47; that stretch reads AILRLLLLASLVVAVVVMVTS. The Extracellular segment spans residues 48 to 75; sequence KETELISVKLDPFPPFMLPLTAKFTQSP. A helical transmembrane segment spans residues 76–96; sequence AFIYFVAGLSVAGLYTIISTL. The Cytoplasmic portion of the chain corresponds to 97–120; it reads ASFYNLLIKPGFCPALVSHFIILD. Residues 121–143 form a helical membrane-spanning segment; sequence VVMLGIVGTATGAAGGVAYIGLK. Over 144-163 the chain is Extracellular; sequence GNSHVGWTKVCNKYGKLCTH. A helical transmembrane segment spans residues 164 to 184; that stretch reads LGASLAVSFFAFIVLLLLIIL. At 185–195 the chain is on the cytoplasmic side; that stretch reads SIHSLSKKIPK.

The protein belongs to the Casparian strip membrane proteins (CASP) family. As to quaternary structure, homodimer and heterodimers.

It localises to the cell membrane. This chain is CASP-like protein IN26 (IN26), found in Ipomoea nil (Japanese morning glory).